A 260-amino-acid chain; its full sequence is Neurotrophin-3 (260 aa).

A signal peptide spans 1 to 18 (MSILFYVMFLPYLCGIHA). A propeptide spanning residues 19–141 (TNMDKRNLPE…VNNRTSRRKR (123 aa)) is cleaved from the precursor. An N-linked (GlcNAc...) asparagine glycan is attached at asparagine 134. Cystine bridges form between cysteine 155–cysteine 220, cysteine 198–cysteine 249, and cysteine 208–cysteine 251.

It belongs to the NGF-beta family.

Its subcellular location is the secreted. Its function is as follows. Seems to promote the survival of visceral and proprioceptive sensory neurons. This is Neurotrophin-3 (ntf3) from Xenopus laevis (African clawed frog).